We begin with the raw amino-acid sequence, 509 residues long: GMP synthase [glutamine-hydrolyzing] (509 aa).

The Glutamine amidotransferase type-1 domain occupies 4–193 (NVLILDFGSQ…LVKIAQVPQN (190 aa)). C79 serves as the catalytic Nucleophile. Catalysis depends on residues H167 and E169. The GMPS ATP-PPase domain occupies 194 to 384 (FTPNAFVSDM…LGIDAELLGR (191 aa)). 221–227 (SGGVDST) provides a ligand contact to ATP.

In terms of assembly, homodimer.

It carries out the reaction XMP + L-glutamine + ATP + H2O = GMP + L-glutamate + AMP + diphosphate + 2 H(+). The protein operates within purine metabolism; GMP biosynthesis; GMP from XMP (L-Gln route): step 1/1. In terms of biological role, catalyzes the synthesis of GMP from XMP. The protein is GMP synthase [glutamine-hydrolyzing] of Flavobacterium psychrophilum (strain ATCC 49511 / DSM 21280 / CIP 103535 / JIP02/86).